The primary structure comprises 1521 residues: MDFIDNQAEESDASTGRSDDDEPQSKKMKMAKDKLKKKKKVVASSDEDEDDEDDEEEGRKEMQGFIADEDDEEEDARSEKSDRSRRSEINDELDDEDLDLIDENLDRQGERKKNRVRLGDSSDEDEPIRRSNQDDDDLQSERGSDDGDKRRGHGGRGGGGYDSDSDRSEDDFIEDDGDAPRRHRKRHRGDEHIPEGAEDDARDVFGVEDFNFDEFYDDDDGEEGLEDEEEEIIEDDGEGGEIKIRRKRDTTKKTTLLESIEPSELERGFLSAADKKIMIEDAPERFQLRRTPVTEADDDELEREAQWIMKFAFEETTVTNQAAVDADGKLECLMNIDSSEIEDKRRAVVNAIKAVLHFIRVRSNSFEVPFIGFYRKESIDNLLTMNNLWIVYDYDEKYCHLSEKKRRLYDLMRRMREYQELSDDITAKRRPINEMDLIDINFAETLEQLTDIHANFQLLYGSLLEDMTKWEKERRAADGEETEYRAKFKSSIRNDKYQMCVENGIGELAGRFGLTAKQFAENLDWRKHDIDQDSAFPLEAAEEYICPAFIDRETVLNGAKFMLAKEISRQPLVRSRVRQEFRDNAHFWVKPTKKGRDTIDETHPLFNKRYIKNKPIRNLTDEEFLYYHKAKQDGLIDMVLMYESDEDQAANQFLVKKFLSDSIFRKDEYTDNVEQWNAVRDQCVNMAITEMLVPYMKEEVYNTILEEAKMAVAKKCKKEFASRIARSGYVPEKEKLDEEDEEHSARRRMMAICYSPVRDEASFGVMVDENGAIVDYLRMVHFTKRGHGGGNTGALKEESMELFKKFVQRRRPHAIALNIEDMECTRLKRDLEEAVAELYSQSKIFSQINVYLMDNELAKVYMRSNISIAENPDHPPTLRQAVSLARQLLDPIPEYAHLWNSDEDIFCLSLHPLQRDIDQEILAQLLNHELVNRVNEEGVDINKCAEFPHYTNMLQFTCGLGPRKATSLLKSIKANDNLIESRSKLVVGCKLGPKVFMNCAGFIRIDTRRVSDKTDAYVEVLDGSRVHPETYEWARKMAVDALEVDDSADPTAALQEIMETPERLRDLDLDAFADELNRQGFGEKKATLYDISSELSERYKDLRAPFVEPSGEALYDLLTRSGKEVKVGCKMLGTVQSVQYRKVERDTIDSMIPEHTEEDQYICPSCKIFTAADPQSVREHLLNAGRPGGCVGSACGIRVRLDNGMTAFCPNKFISSSHVDNPLTRVKLNQPYWFKVMAINKEKFSILLSCKSSDLKEDAPAERDDFWDQQQYDDDVAAMKKETTKKKDADTRVKRVIAHPNFHNVSYEAATKMLDEMDWSDCIIRPSANKESGLSVTWKICDRIYHNFFVKESAKDQVFSIGRTLSVGGEDFEDLDELIARFVLPMIQISHEITTHKYFFTQGTSEDTDQVETFVHEKRRELGRSPYVFSASYRQPCQFCISYMFDNSNRIRHEHFKISPRGIRFRQQNFDSLDRMMAWFKRHFNEPPPGIRSSLSYRPTGRTGPPPSAPYQQPPQQQYYR.

The segment at 1–204 (MDFIDNQAEE…EGAEDDARDV (204 aa)) is disordered. The span at 26–41 (KKMKMAKDKLKKKKKV) shows a compositional bias: basic residues. Residues 26 to 42 (KKMKMAKDKLKKKKKVV) carry the Nuclear localization signal motif. 2 stretches are compositionally biased toward acidic residues: residues 45 to 56 (SDEDEDDEDDEE) and 67 to 76 (ADEDDEEEDA). Positions 77–89 (RSEKSDRSRRSEI) are enriched in basic and acidic residues. A compositionally biased stretch (acidic residues) spans 90–103 (NDELDDEDLDLIDE). The segment covering 127-149 (PIRRSNQDDDDLQSERGSDDGDK) has biased composition (basic and acidic residues). Residues 167 to 177 (RSEDDFIEDDG) are compositionally biased toward acidic residues. In terms of domain architecture, S1 motif spans 1182–1251 (LNAGRPGGCV…EKFSILLSCK (70 aa)). In terms of domain architecture, SH2 spans 1299–1388 (HPNFHNVSYE…IARFVLPMIQ (90 aa)). The tract at residues 1490–1521 (GIRSSLSYRPTGRTGPPPSAPYQQPPQQQYYR) is disordered. The span at 1504–1513 (GPPPSAPYQQ) shows a compositional bias: pro residues.

The protein belongs to the SPT6 family. Interacts with glp-1 and lin-12.

The protein localises to the nucleus. In terms of biological role, histone H3-H4 chaperone that plays a role in maintenance of chromatin structure during RNA polymerase II transcription elongation. May be required for several aspects of morphogenesis of C.briggsae, including regulation of division in the germline and gut and specification of ventral-uterine precursor cell fate. The polypeptide is Suppressor of Ty 6 homolog (emb-5) (Caenorhabditis briggsae).